The chain runs to 748 residues: Sulfhydryl oxidase 1 (748 aa).

A signal peptide spans 1–32; that stretch reads MRRCGRLSGPPSLLLLLLLLSPLLFSGPGAYA. The 127-residue stretch at 33–159 folds into the Thioredoxin domain; it reads ARLSVLYSSS…RMRLIDALES (127 aa). Catalysis depends on nucleophile residues Cys-73 and Cys-76. Intrachain disulfides connect Cys-73/Cys-76 and Cys-104/Cys-113. Residues Asn-133 and Asn-246 are each glycosylated (N-linked (GlcNAc...) asparagine). Cys-396 and Cys-408 form a disulfide bridge. Positions 399-506 constitute an ERV/ALR sulfhydryl oxidase domain; it reads SEPHFRGFPC…EDPHFPKVQW (108 aa). FAD contacts are provided by residues Arg-404, Trp-411, His-415, Asp-454, His-458, 481 to 488, Lys-503, and Trp-506; that span reads WTSHNRVN. Cys-452 and Cys-455 are oxidised to a cystine. An intrachain disulfide couples Cys-512 to Cys-515. The tract at residues 581-647 is disordered; sequence GHEQAASAES…QENAPGQQHL (67 aa). The span at 628 to 638 shows a compositional bias: basic and acidic residues; the sequence is ERMEDHQRDMQ. Residues 711–731 form a helical membrane-spanning segment; the sequence is ISLCVGLYSVSFMGLLAMYTY.

This sequence belongs to the quiescin-sulfhydryl oxidase (QSOX) family. As to quaternary structure, monomer. The cofactor is FAD. Post-translationally, N-glycosylated. O-glycosylated on Thr and Ser residues. Detected in skin (at protein level). Expressed in the seminal vesicles and skin.

It is found in the golgi apparatus membrane. The protein resides in the secreted. The catalysed reaction is 2 R'C(R)SH + O2 = R'C(R)S-S(R)CR' + H2O2. In terms of biological role, catalyzes the oxidation of sulfhydryl groups in peptide and protein thiols to disulfides with the reduction of oxygen to hydrogen peroxide. Plays a role in disulfide bond formation in a variety of extracellular proteins. In fibroblasts, required for normal incorporation of laminin into the extracellular matrix, and thereby for normal cell-cell adhesion and cell migration. This is Sulfhydryl oxidase 1 (Qsox1) from Mus musculus (Mouse).